A 316-amino-acid polypeptide reads, in one-letter code: Methionyl-tRNA formyltransferase (316 aa).

112–115 (GLLP) lines the (6S)-5,6,7,8-tetrahydrofolate pocket.

It belongs to the Fmt family.

The catalysed reaction is L-methionyl-tRNA(fMet) + (6R)-10-formyltetrahydrofolate = N-formyl-L-methionyl-tRNA(fMet) + (6S)-5,6,7,8-tetrahydrofolate + H(+). Attaches a formyl group to the free amino group of methionyl-tRNA(fMet). The formyl group appears to play a dual role in the initiator identity of N-formylmethionyl-tRNA by promoting its recognition by IF2 and preventing the misappropriation of this tRNA by the elongation apparatus. The polypeptide is Methionyl-tRNA formyltransferase (Chlamydia muridarum (strain MoPn / Nigg)).